A 342-amino-acid polypeptide reads, in one-letter code: Cytochrome f (342 aa).

A signal peptide spans 1 to 28 (MKKQWIAGAFGLTAALAGLVSVPQSALA). Heme contacts are provided by Cys-48, Cys-51, and His-52. A helical transmembrane segment spans residues 305–325 (VTWLVAFLAAAFICQLLLVLK).

It belongs to the cytochrome f family. The 4 large subunits of the cytochrome b6-f complex are cytochrome b6, subunit IV (17 kDa polypeptide, PetD), cytochrome f and the Rieske protein, while the 4 small subunits are PetG, PetL, PetM and PetN. The complex functions as a dimer. Heme is required as a cofactor.

It localises to the cell inner membrane. Its function is as follows. Component of the cytochrome b6-f complex, which mediates electron transfer between photosystem II (PSII) and photosystem I (PSI), cyclic electron flow around PSI, and state transitions. The sequence is that of Cytochrome f (petA) from Gloeobacter violaceus (strain ATCC 29082 / PCC 7421).